The following is a 437-amino-acid chain: MLTAFARAFKTPDLRKKLLFTLGIIVIYRIGTHIPIPGVDYSAVQFCIDQTKSNSGLFGLVNMFSGGALLQITIFALGIMPYITASIILQLLTVVIPRLEALKKEGQSGTAKITQYTRYLTVALAVLQGTGLVATARSGALFSQCPQANNIVPDDSIFTTLTMVVTMTAGTAVVMWLGELITDRGIGNGMSILMFISIAATFPSALWSIKEQGDLAGGWIEFGIVIAVGLVMVALVVFVEQAQRRIPVQYAKRMIGRRSYGGTSTYIPLKVNQAGIIPVIFASSLLYIPALVVQFSGSTAGWAAWIQKNLADTAAPAHITVYFFLIIFFAFFYVAISFNPEEVADNMKKYGGFIPGIRAGRPTAEYLSYVLNRITWPGSLYLGLIALVPTMALAPLGANQNFPFGGTSILIIVGVGLETVKQIESQLQQRNYEGFLR.

The next 10 membrane-spanning stretches (helical) occupy residues 19 to 39 (LFTLGIIVIYRIGTHIPIPGV), 69 to 89 (LLQITIFALGIMPYITASIIL), 122 to 142 (VALAVLQGTGLVATARSGALF), 157 to 177 (IFTTLTMVVTMTAGTAVVMWL), 189 to 209 (GMSILMFISIAATFPSALWSI), 219 to 239 (WIEFGIVIAVGLVMVALVVFV), 275 to 295 (GIIPVIFASSLLYIPALVVQF), 318 to 338 (HITVYFFLIIFFAFFYVAISF), 378 to 398 (GSLYLGLIALVPTMALAPLGA), and 400 to 420 (QNFPFGGTSILIIVGVGLETV).

It belongs to the SecY/SEC61-alpha family. Component of the Sec protein translocase complex. Heterotrimer consisting of SecY, SecE and SecG subunits. The heterotrimers can form oligomers, although 1 heterotrimer is thought to be able to translocate proteins. Interacts with the ribosome. Interacts with SecDF, and other proteins may be involved. Interacts with SecA.

The protein localises to the cell membrane. The central subunit of the protein translocation channel SecYEG. Consists of two halves formed by TMs 1-5 and 6-10. These two domains form a lateral gate at the front which open onto the bilayer between TMs 2 and 7, and are clamped together by SecE at the back. The channel is closed by both a pore ring composed of hydrophobic SecY resides and a short helix (helix 2A) on the extracellular side of the membrane which forms a plug. The plug probably moves laterally to allow the channel to open. The ring and the pore may move independently. The protein is Protein translocase subunit SecY of Streptomyces scabiei.